The following is a 155-amino-acid chain: UPF0251 protein Paes_1249 (155 aa).

Belongs to the UPF0251 family.

The polypeptide is UPF0251 protein Paes_1249 (Prosthecochloris aestuarii (strain DSM 271 / SK 413)).